Reading from the N-terminus, the 256-residue chain is uncharacterized protein (256 aa).

ATP is bound at residue 29 to 36 (GDDHSGKT).

This is an uncharacterized protein from Saccharomyces cerevisiae (strain ATCC 204508 / S288c) (Baker's yeast).